The sequence spans 335 residues: uncharacterized protein (335 aa).

Disordered regions lie at residues 153–174, 218–239, and 254–295; these read LNDK…SDRI, HTSV…QEEV, and RCKV…PVTS. Residues 156–170 show a composition bias toward acidic residues; sequence KEDEEKLDQTTESEE. Composition is skewed to low complexity over residues 222–234 and 275–295; these read RRSM…SASS and THTS…PVTS.

This is an uncharacterized protein from Caenorhabditis elegans.